The chain runs to 218 residues: Probable nicotinate-nucleotide adenylyltransferase (218 aa).

This sequence belongs to the NadD family.

The catalysed reaction is nicotinate beta-D-ribonucleotide + ATP + H(+) = deamido-NAD(+) + diphosphate. It functions in the pathway cofactor biosynthesis; NAD(+) biosynthesis; deamido-NAD(+) from nicotinate D-ribonucleotide: step 1/1. Functionally, catalyzes the reversible adenylation of nicotinate mononucleotide (NaMN) to nicotinic acid adenine dinucleotide (NaAD). The protein is Probable nicotinate-nucleotide adenylyltransferase of Helicobacter hepaticus (strain ATCC 51449 / 3B1).